A 408-amino-acid chain; its full sequence is RNA-splicing ligase RtcB (408 aa).

Mn(2+) is bound by residues aspartate 75, cysteine 78, histidine 168, histidine 185, and histidine 281. Asparagine 167–glutamate 171 provides a ligand contact to GMP. GMP is bound by residues histidine 281 to asparagine 282, proline 313 to methionine 316, serine 320, histidine 337 to glycine 340, and lysine 407. The active-site GMP-histidine intermediate is histidine 337.

The protein belongs to the RtcB family. As to quaternary structure, monomer. It depends on Mn(2+) as a cofactor.

It catalyses the reaction a 3'-end 3'-phospho-ribonucleotide-RNA + a 5'-end dephospho-ribonucleoside-RNA + GTP = a ribonucleotidyl-ribonucleotide-RNA + GMP + diphosphate. The catalysed reaction is a 3'-end 2',3'-cyclophospho-ribonucleotide-RNA + a 5'-end dephospho-ribonucleoside-RNA + GTP + H2O = a ribonucleotidyl-ribonucleotide-RNA + GMP + diphosphate + H(+). Its function is as follows. GTP-dependent RNA ligase that is involved in RNA repair. Joins RNA with 2',3'-cyclic-phosphate or 3'-phosphate ends to RNA with 5'-hydroxy ends. Also acts as a DNA ligase in case of DNA damage by splicing 'dirty' DNA breaks, characterized by 3'-phosphate (or cyclic-phosphate) and 5'-hydroxy ends that cannot be sealed by classical DNA ligases. Repairs tRNA cleaved by colicins D or E5, does not repair damaged 16S rRNA. Able to catalyze tRNA splicing in vivo in yeast, but bacteria are not known to splice tRNA. The polypeptide is RNA-splicing ligase RtcB (Escherichia coli (strain K12)).